The sequence spans 759 residues: Glycerophosphodiester phosphodiesterase GDPDL3 (759 aa).

The N-terminal stretch at 1 to 27 (MRGLLRASSLLLCGVILIQLLAAQIHA) is a signal peptide. At 28–738 (QSKKPKSPWP…TNAQAPSGQT (711 aa)) the chain is on the extracellular side. One can recognise a GP-PDE 1 domain in the interval 44–344 (PLVIARGGFS…DFPITASASL (301 aa)). Asn99, Asn186, Asn242, Asn251, Asn326, Asn353, Asn413, Asn424, Asn488, Asn528, Asn540, and Asn647 each carry an N-linked (GlcNAc...) asparagine glycan. The GP-PDE 2 domain maps to 360 to 661 (FLVITKDGAS…EFPFTAARYK (302 aa)). Residues 702 to 734 (FTDADVTEPPLPPVTAKAPTSSPGTPSTNAQAP) are disordered. The segment covering 719–734 (APTSSPGTPSTNAQAP) has biased composition (polar residues). The helical transmembrane segment at 739 to 759 (RITLSLLLSVFAMVLASLLLL) threads the bilayer.

It belongs to the glycerophosphoryl diester phosphodiesterase family. As to expression, expressed in roots, shoots, rosette and cauline leaves, stems, flowers and siliques.

It localises to the cell membrane. The catalysed reaction is a sn-glycero-3-phosphodiester + H2O = an alcohol + sn-glycerol 3-phosphate + H(+). In terms of biological role, involved in primary cell wall organization. Required for the accumulation of crystalline cellulose. The protein is Glycerophosphodiester phosphodiesterase GDPDL3 of Arabidopsis thaliana (Mouse-ear cress).